A 219-amino-acid polypeptide reads, in one-letter code: Large ribosomal subunit protein uL3 (219 aa).

This sequence belongs to the universal ribosomal protein uL3 family. Part of the 50S ribosomal subunit. Forms a cluster with proteins L14 and L19.

In terms of biological role, one of the primary rRNA binding proteins, it binds directly near the 3'-end of the 23S rRNA, where it nucleates assembly of the 50S subunit. This chain is Large ribosomal subunit protein uL3, found in Chlamydia pneumoniae (Chlamydophila pneumoniae).